The chain runs to 449 residues: Tubulin alpha-2B chain (449 aa).

Q11 contacts GTP. Position 40 is an N6-acetyllysine (K40). The GTP site is built by E71, S140, G144, T145, T179, N206, and N228. Mg(2+) is bound at residue E71. E254 is an active-site residue.

It belongs to the tubulin family. Dimer of alpha and beta chains. A typical microtubule is a hollow water-filled tube with an outer diameter of 25 nm and an inner diameter of 15 nM. Alpha-beta heterodimers associate head-to-tail to form protofilaments running lengthwise along the microtubule wall with the beta-tubulin subunit facing the microtubule plus end conferring a structural polarity. Microtubules usually have 13 protofilaments but different protofilament numbers can be found in some organisms and specialized cells. Mg(2+) is required as a cofactor. Acetylation of alpha chains at Lys-40 stabilizes microtubules and affects affinity and processivity of microtubule motors. This modification has a role in multiple cellular functions, ranging from cell motility, cell cycle progression or cell differentiation to intracellular trafficking and signaling.

The protein resides in the cytoplasm. The protein localises to the cytoskeleton. Its subcellular location is the spindle. It localises to the nucleus. The enzyme catalyses GTP + H2O = GDP + phosphate + H(+). Its function is as follows. Tubulin is the major constituent of microtubules, a cylinder consisting of laterally associated linear protofilaments composed of alpha- and beta-tubulin heterodimers. Microtubules grow by the addition of GTP-tubulin dimers to the microtubule end, where a stabilizing cap forms. Below the cap, tubulin dimers are in GDP-bound state, owing to GTPase activity of alpha-tubulin. In Physarum polycephalum (Slime mold), this protein is Tubulin alpha-2B chain (ALTBE).